A 908-amino-acid chain; its full sequence is MADKTVKELADMVSKTASAVQQQLVDAGLPARAEGDLVTELEQEKLVTYLKQSHGQEEKRRISLKSKTTSTARVTGSSGKSKSVNVEVRKKKVFEKPDPEKMAEELAAREQAMIESQARAAKDAEDRAATKKKSEERQAATLAAMRASLGSSKKSDDKNDDISTSVVVKKGGKTTIEVKPKDQPKKKVTATKPKVETAVERKAREVREKEEARLREIETETRRTQAEEAQKRTLEQMRKMAGQYTDQPATEVRKDEPLAEGLVGDALEESFEKERREIKRGTSTTSARGRGRRKNQDEREIKNRKNGLRSSQSSQHKFEKPVEKIVYDVEISEQITVSDLAQRMAVKAREVTKLLMKMGEIARESDMIDQATASLIVEEMGHNPVPVSDTKVEDDLQDAVDERSSNVQTRPPVVTIMGHVDHGKTSLLDKIRETKVATGEAGGITQHIGAYHVKTARGVITFLDTPGHAAFSAMRSRGAQATDIVVLVVAADDGMMPQTEEAIDHARAAGTPLIVAINKMDKPSADPDRVLNELTAKEVVSEDWGGDTPMARISAKTGDGIDELLELISLQAELMELEAPLDGPAQGVVIESRLEKGRGPVVSVLVKKGTLKQGDLVLAGEYYGKVRAMTDEHGKRIQSAGPSIPVEILGLPETPAAGSEFLVLTDEKKAREVADFRTNRERERQLERQNAMRLESMFDQMEQGNVSYLNIVLKTDVRGSLEALLAALNELSTDEVKVRVISSGVGPISESDVTLAESSEAVLLGFNVRADATARRKSDSANMDIRYYSVIYGLIDDVKAAMSGMLAPEHREKILGVADVREVFRSSKFGAAAGCMVVEGTIYRNKPIRVLRNDQVIFTGQLQSLRRYKEDVNEVRTGMECGLAVRGYDVEAGDKIEVFEIQEFARTI.

The tract at residues 52–318 (QSHGQEEKRR…RSSQSSQHKF (267 aa)) is disordered. Residues 65–84 (KSKTTSTARVTGSSGKSKSV) are compositionally biased toward polar residues. Basic and acidic residues-rich tracts occupy residues 94–108 (FEKP…ELAA), 120–138 (AAKD…EERQ), 176–185 (IEVKPKDQPK), 193–238 (PKVE…EQMR), 270–280 (SFEKERREIKR), and 294–303 (KNQDEREIKN). Positions 409–578 (TRPPVVTIMG…SLQAELMELE (170 aa)) constitute a tr-type G domain. The tract at residues 418–425 (GHVDHGKT) is G1. 418 to 425 (GHVDHGKT) is a GTP binding site. Positions 443-447 (GITQH) are G2. The tract at residues 464-467 (DTPG) is G3. GTP is bound by residues 464–468 (DTPGH) and 518–521 (NKMD). The tract at residues 518-521 (NKMD) is G4. The tract at residues 554 to 556 (SAK) is G5.

This sequence belongs to the TRAFAC class translation factor GTPase superfamily. Classic translation factor GTPase family. IF-2 subfamily.

It localises to the cytoplasm. Its function is as follows. One of the essential components for the initiation of protein synthesis. Protects formylmethionyl-tRNA from spontaneous hydrolysis and promotes its binding to the 30S ribosomal subunits. Also involved in the hydrolysis of GTP during the formation of the 70S ribosomal complex. The polypeptide is Translation initiation factor IF-2 (Psychrobacter cryohalolentis (strain ATCC BAA-1226 / DSM 17306 / VKM B-2378 / K5)).